A 154-amino-acid polypeptide reads, in one-letter code: Prefoldin subunit 2 (154 aa).

Residues 1–18 (MAENGGRAGKSSGSGTGK) are compositionally biased toward gly residues. Disordered regions lie at residues 1 to 20 (MAEN…GKGA) and 124 to 154 (IRLM…VLVS). Residues 124–139 (IRLMGEDEKPAAKENS) show a composition bias toward basic and acidic residues. A compositionally biased stretch (low complexity) spans 140–154 (EGAGAKASSAGVLVS).

It belongs to the prefoldin subunit beta family. As to quaternary structure, heterohexamer of two PFD-alpha type and four PFD-beta type subunits. Component of the PAQosome complex which is responsible for the biogenesis of several protein complexes and which consists of R2TP complex members RUVBL1, RUVBL2, RPAP3 and PIH1D1, URI complex members PFDN2, PFDN6, PDRG1, UXT and URI1 as well as ASDURF, POLR2E and DNAAF10/WDR92. Interacts with URI1; the interaction is phosphorylation-dependent and occurs in a growth-dependent manner.

Its subcellular location is the nucleus. The protein localises to the cytoplasm. The protein resides in the mitochondrion. Its function is as follows. Binds specifically to cytosolic chaperonin (c-CPN) and transfers target proteins to it. Binds to nascent polypeptide chain and promotes folding in an environment in which there are many competing pathways for nonnative proteins. This Bos taurus (Bovine) protein is Prefoldin subunit 2 (PFDN2).